The sequence spans 380 residues: Apelin receptor (380 aa).

Over M1–L30 the chain is Extracellular. N15 carries an N-linked (GlcNAc...) asparagine glycan. 2 cysteine pairs are disulfide-bonded: C19/C281 and C102/C181. The chain crosses the membrane as a helical span at residues I31–F54. Topologically, residues R55–A64 are cytoplasmic. A helical transmembrane segment spans residues D65–A86. At T87–T99 the chain is on the extracellular side. A helical membrane pass occupies residues F100–F125. The Cytoplasmic segment spans residues D126 to G146. A helical membrane pass occupies residues A147–V164. Topologically, residues M165 to E198 are extracellular. N-linked (GlcNAc...) asparagine glycosylation occurs at N175. Residues V199 to F223 form a helical membrane-spanning segment. At I224–L246 the chain is on the cytoplasmic side. A helical transmembrane segment spans residues L247–L270. Topologically, residues Y271–N289 are extracellular. The chain crosses the membrane as a helical span at residues I290–F312. Residues D313–D380 lie on the Cytoplasmic side of the membrane. Residues K342–S351 are compositionally biased toward low complexity. The interval K342–D380 is disordered. Polar residues predominate over residues P371–D380.

It belongs to the G-protein coupled receptor 1 family. Homodimer; dimerization inhibits APLNR-mediated G protein and beta-arrestin signaling pathways compared to monomeric APLNR. As to expression, expressed in heart, brain, kidney, stomach, spleen, thymus, lung, ovary, small intestine and colon, adipose tissues and pancreas. Expressed in glial cells, astrocytes and neuronal subpopulations. Expressed in embryonic (ESCs) and induced (iPSCs) pluripotent stem cells.

It localises to the cell membrane. In terms of biological role, g protein-coupled receptor for peptide hormones apelin (APLN) and apelin receptor early endogenous ligand (APELA/ELA), that plays a role in the regulation of normal cardiovascular function and fluid homeostasis. When acting as apelin receptor, activates both G(i) protein pathway that inhibits adenylate cyclase activity, and the beta-arrestin pathway that promotes internalization of the receptor. APLNR/APJ also functions as mechanoreceptor that is activated by pathological stimuli in a G-protein-independent fashion to induce beta-arrestin signaling, hence eliciting cardiac hypertrophy. However, the presence of apelin ligand blunts cardiac hypertrophic induction from APLNR/APJ on response to pathological stimuli. Plays a key role in early development such as gastrulation, blood vessels formation and heart morphogenesis by acting as a APELA receptor. May promote angioblast migration toward the embryonic midline, i.e. the position of the future vessel formation, during vasculogenesis. Promotes sinus venosus (SV)-derived endothelial cells migration into the developing heart to promote coronary blood vessel development. Also plays a role in various processes in adults such as regulation of blood vessel formation, blood pressure, heart contractility and heart failure. Its function is as follows. (Microbial infection) Alternative coreceptor with CD4 for HIV-1 infection; may be involved in the development of AIDS dementia. The protein is Apelin receptor of Homo sapiens (Human).